We begin with the raw amino-acid sequence, 663 residues long: CXXC-type zinc finger protein 1 (663 aa).

The PHD-type zinc-finger motif lies at 60 to 110; sequence QAYCICRSSDCSRFMIGCDGCEEWYHGDCIGITEKEAKHIKQYYCRRCKKE. Low complexity predominate over residues 134–161; it reads TSLNAPGVGPSGAAPAAAPVASATTSQQ. The disordered stretch occupies residues 134 to 183; the sequence is TSLNAPGVGPSGAAPAAAPVASATTSQQAPPPTTAAAKRKNSSAREPKMG. A CXXC-type zinc finger spans residues 175–219; the sequence is SSAREPKMGKRCGTCEGCRRPNCNQCDACRVRVGHKPRCIFRTCV. Zn(2+) is bound by residues cysteine 186, cysteine 189, cysteine 192, cysteine 197, cysteine 200, cysteine 203, cysteine 213, and cysteine 218. The segment at 230–254 is disordered; that stretch reads QATQAGPSRKREKAAPKSRNVQVGP. Serine 258 carries the post-translational modification Phosphoserine.

As to quaternary structure, component of the SET1 complex, composed at least of the catalytic subunit Set1, wds/WDR5, Wdr82, Rbbp5, ash2, Cfp1/CXXC1, hcf and Dpy-30L1.

It is found in the nucleus. Functionally, component of the SET1 complex that specifically di- and trimethylates 'Lys-4' of histone H3. Essential for Set1 association with chromatin and trimethylation of histone H3 at 'Lys-4' at transcription puffs. Additionally, is critical for general chromosomal association of Set1. This Drosophila melanogaster (Fruit fly) protein is CXXC-type zinc finger protein 1 (Cfp1).